Reading from the N-terminus, the 473-residue chain is Photosystem II CP43 reaction center protein (473 aa).

A propeptide spanning residues 1–14 (MKTLYSLRRSYPVE) is cleaved from the precursor. Residue T15 is modified to N-acetylthreonine. T15 bears the Phosphothreonine mark. Transmembrane regions (helical) follow at residues 69 to 93 (LFEV…PHLA), 134 to 155 (LIGP…KDKN), 178 to 200 (KALY…RKIT), 255 to 275 (KPFA…LSYS), and 291 to 312 (WFNN…ASQA). A [CaMn4O5] cluster-binding site is contributed by E367. A helical membrane pass occupies residues 447–471 (RARAAAAGFEKGIDRDTEPVLFMNP).

It belongs to the PsbB/PsbC family. PsbC subfamily. As to quaternary structure, PSII is composed of 1 copy each of membrane proteins PsbA, PsbB, PsbC, PsbD, PsbE, PsbF, PsbH, PsbI, PsbJ, PsbK, PsbL, PsbM, PsbT, PsbX, PsbY, PsbZ, Psb30/Ycf12, at least 3 peripheral proteins of the oxygen-evolving complex and a large number of cofactors. It forms dimeric complexes. The cofactor is Binds multiple chlorophylls and provides some of the ligands for the Ca-4Mn-5O cluster of the oxygen-evolving complex. It may also provide a ligand for a Cl- that is required for oxygen evolution. PSII binds additional chlorophylls, carotenoids and specific lipids..

The protein resides in the plastid. Its subcellular location is the chloroplast thylakoid membrane. One of the components of the core complex of photosystem II (PSII). It binds chlorophyll and helps catalyze the primary light-induced photochemical processes of PSII. PSII is a light-driven water:plastoquinone oxidoreductase, using light energy to abstract electrons from H(2)O, generating O(2) and a proton gradient subsequently used for ATP formation. In Zygnema circumcarinatum (Green alga), this protein is Photosystem II CP43 reaction center protein.